The chain runs to 186 residues: TATA-box-binding protein B (186 aa).

2 consecutive repeat copies span residues 10 to 86 and 101 to 179.

Belongs to the TBP family.

Its function is as follows. General factor that plays a role in the activation of archaeal genes transcribed by RNA polymerase. Binds specifically to the TATA box promoter element which lies close to the position of transcription initiation. The sequence is that of TATA-box-binding protein B (tbpB1) from Halobacterium salinarum (strain ATCC 700922 / JCM 11081 / NRC-1) (Halobacterium halobium).